We begin with the raw amino-acid sequence, 229 residues long: Probable transmembrane reductase CYB561D1 (229 aa).

At 1 to 24 (MQPLEVGLVPAPAGEPRLTRWLRR) the chain is on the cytoplasmic side. Positions 22-224 (LRRGSGILAH…HQISRSYLPR (203 aa)) constitute a Cytochrome b561 domain. A helical transmembrane segment spans residues 25–45 (GSGILAHLVALGFTIFLTALS). The Lumenal portion of the chain corresponds to 46–53 (RPGTSLFS). Residues 54 to 74 (WHPVFMALAFCLCMAEAILLF) form a helical membrane-spanning segment. His-55 provides a ligand contact to heme b. Topologically, residues 75–91 (SPEHSLFFFCSRKARIR) are cytoplasmic. A helical membrane pass occupies residues 92–112 (LHWAGQTLAILCAALGLGFII). Heme b contacts are provided by His-93 and His-127. Over 113-128 (SSRTRSELPHLVSWHS) the chain is Lumenal. A helical membrane pass occupies residues 129–149 (WVGALTLLATAVQALCGLCLL). Residues 150–169 (CPRAARVSRVARLKLYHLTC) are Cytoplasmic-facing. His-166 contacts heme b. A helical membrane pass occupies residues 170–190 (GLVVYLMATVTVLLGMYSVWF). The Lumenal segment spans residues 191-193 (QAQ). A helical transmembrane segment spans residues 194–214 (IKGAAWYLCLALPVYPALVIM). Residues 215–229 (HQISRSYLPRKKMEM) lie on the Cytoplasmic side of the membrane.

The cofactor is heme b.

It localises to the membrane. The enzyme catalyses monodehydro-L-ascorbate radical(out) + L-ascorbate(in) = monodehydro-L-ascorbate radical(in) + L-ascorbate(out). It catalyses the reaction Fe(3+)(out) + L-ascorbate(in) = monodehydro-L-ascorbate radical(in) + Fe(2+)(out) + H(+). Functionally, probable transmembrane reductase that may use ascorbate as an electron donor and transfer electrons across membranes to reduce monodehydro-L-ascorbate radical and iron cations Fe(3+) in another cellular compartment. This chain is Probable transmembrane reductase CYB561D1, found in Homo sapiens (Human).